The sequence spans 365 residues: 1-aminocyclopropane-1-carboxylate oxidase homolog 9 (365 aa).

The region spanning 214–313 (KGLLMLCHYY…RISVACFVSS (100 aa)) is the Fe2OG dioxygenase domain. Fe cation-binding residues include histidine 238, aspartate 240, and histidine 294. Arginine 304 contacts 2-oxoglutarate.

It belongs to the iron/ascorbate-dependent oxidoreductase family. It depends on Fe(2+) as a cofactor.

The chain is 1-aminocyclopropane-1-carboxylate oxidase homolog 9 from Arabidopsis thaliana (Mouse-ear cress).